The following is a 225-amino-acid chain: Small ribosomal subunit protein uS3 (225 aa).

The KH type-2 domain maps to 16-85 (VYEYLVKETE…TPQIEVKDVK (70 aa)). The disordered stretch occupies residues 200–225 (GENVGTESETDKADEQGREAANTEES). The span at 208-217 (ETDKADEQGR) shows a compositional bias: basic and acidic residues.

The protein belongs to the universal ribosomal protein uS3 family. As to quaternary structure, part of the 30S ribosomal subunit.

Binds the lower part of the 30S subunit head. The chain is Small ribosomal subunit protein uS3 from Thermoplasma volcanium (strain ATCC 51530 / DSM 4299 / JCM 9571 / NBRC 15438 / GSS1).